The sequence spans 310 residues: uncharacterized protein (310 aa).

A compositionally biased stretch (basic residues) spans 1–11 (MKVKSILKHSR). Disordered stretches follow at residues 1 to 227 (MKVK…SDHA) and 242 to 310 (AMEE…NENE). Polar residues predominate over residues 12-50 (MSSPSLETDSMESGQQQNMVSSTPSIDMNESDCSGTGTP). Over residues 51-80 (SEERIRRLRWDEENLSKAEQQKSAKMKITE) the composition is skewed to basic and acidic residues. A compositionally biased stretch (acidic residues) spans 91–105 (PDDEVPEINLDETDS). Low complexity predominate over residues 110-121 (TAGTLGDTLGTL). 2 stretches are compositionally biased toward basic and acidic residues: residues 126–150 (VSKD…KKEP) and 182–195 (LPSK…ETKP). A compositionally biased stretch (acidic residues) spans 242 to 253 (AMEEEALSEAEE). A compositionally biased stretch (basic and acidic residues) spans 254-265 (NIPKKKPDFNEL). Position 285 is a phosphoserine (S285). Over residues 297–310 (DSGSASDVNMNENE) the composition is skewed to polar residues.

This is an uncharacterized protein from Schizosaccharomyces pombe (strain 972 / ATCC 24843) (Fission yeast).